The following is a 712-amino-acid chain: MSNPQDQLSNDLANASISGDQSKQPQQQQPQQQQPYFNPNQAQAFVPTGGYQQFQPQQQQQYGGYQQNYTQYQAGGYQQNYNNRGGYQQNYNNRGGYQQNYNNRGGYQQQQQQQYQAYNPNQQYGGYQAYNPQQQQQQQTQSQGMSLADFQKQKAEQQASLNKPAVKKTLKLASSSGIKLANATKKVDTAKPAASKEASPAPKDEEASAEPEAKKESTPVPASSSPAPAAADSTPAPVKKESTPTPSVASKSAPVSASASVVTADALAKEQEDEVDEEVVKDMFGGKDHVSIIFMGHVDAGKSTMGGNILYLTGSVDKRTVEKYEREAKDAGRQGWYLSWVMDTNKEERNDGKTIEVGKAYFETDKRRYTILDAPGHKMYVSEMIGGASQADVGILVISARKGEYETGFEKGGQTREHALLAKTQGVNKIIVVVNKMDDPTVNWSKERYQECTTKLGVFLKGIGYNKDDIINMPVSGYTGAGLKDRVNPKDCPWYEGPSLLEYLDNMDTMNRKINGPFMMPVSGKMKDLGTVVEGKIESGHVKKGTNLILMPNKTPVEVLTIYNETEQEADTAFSGEQVRLKIKGVEEEDLQPGYVLTSPKNPVKTVTKFEAQIAIVELKSILSNGFSCVMHLHTAIEEVKFVELKHKLEKGTNRKSKKPPAFAKKGMKIIAILEVSEPVCAETYKDYPQLGRFTLRDQGTTIAIGKITKLL.

A compositionally biased stretch (polar residues) spans 1–23 (MSNPQDQLSNDLANASISGDQSK). Disordered stretches follow at residues 1–64 (MSNP…QYGG), 76–115 (GYQQNYNNRGGYQQNYNNRGGYQQNYNNRGGYQQQQQQQY), 132–162 (PQQQQQQQTQSQGMSLADFQKQKAEQQASLN), and 184–256 (TKKV…APVS). Residues 16-143 (SISGDQSKQP…QQQQQQTQSQ (128 aa)) are several sort of repeats. Composition is skewed to low complexity over residues 24–35 (QPQQQQPQQQQP) and 48–64 (TGGYQQFQPQQQQQYGG). 2 stretches are compositionally biased toward low complexity: residues 132–141 (PQQQQQQQTQ) and 190–201 (AKPAASKEASPA). The charged stretch occupies residues 144 to 282 (GMSLADFQKQ…DEVDEEVVKD (139 aa)). The span at 202-217 (PKDEEASAEPEAKKES) shows a compositional bias: basic and acidic residues. Low complexity predominate over residues 218–256 (TPVPASSSPAPAAADSTPAPVKKESTPTPSVASKSAPVS). Residues 287-512 (KDHVSIIFMG…YLDNMDTMNR (226 aa)) form the tr-type G domain. The G1 stretch occupies residues 296–303 (GHVDAGKS). 296 to 303 (GHVDAGKS) serves as a coordination point for GTP. The G2 stretch occupies residues 352–356 (GKTIE). Thr-370 bears the Phosphothreonine mark. Residues 373–376 (DAPG) form a G3 region. GTP-binding positions include 373–377 (DAPGH) and 435–438 (NKMD). The segment at 435–438 (NKMD) is G4. Residues 476–478 (SGY) are G5.

The protein belongs to the TRAFAC class translation factor GTPase superfamily. Classic translation factor GTPase family. ERF3 subfamily.

It is found in the cytoplasm. Functionally, involved in translation termination. Stimulates the activity of ERF1. Binds guanine nucleotides. In Candida maltosa (Yeast), this protein is Eukaryotic peptide chain release factor GTP-binding subunit (SUP35).